Here is a 352-residue protein sequence, read N- to C-terminus: uncharacterized protein (352 aa).

This is an uncharacterized protein from Acanthamoeba polyphaga mimivirus (APMV).